A 199-amino-acid chain; its full sequence is dITP/XTP pyrophosphatase (199 aa).

Residue 7-12 (TGNKGK) coordinates substrate. Residue Asp71 is the Proton acceptor of the active site. Asp71 is a binding site for Mg(2+). Substrate-binding positions include Ala72, 154–157 (FGYD), Lys177, and 182–183 (HR).

The protein belongs to the HAM1 NTPase family. Homodimer. Mg(2+) serves as cofactor.

The enzyme catalyses XTP + H2O = XMP + diphosphate + H(+). It catalyses the reaction dITP + H2O = dIMP + diphosphate + H(+). The catalysed reaction is ITP + H2O = IMP + diphosphate + H(+). Functionally, pyrophosphatase that catalyzes the hydrolysis of nucleoside triphosphates to their monophosphate derivatives, with a high preference for the non-canonical purine nucleotides XTP (xanthosine triphosphate), dITP (deoxyinosine triphosphate) and ITP. Seems to function as a house-cleaning enzyme that removes non-canonical purine nucleotides from the nucleotide pool, thus preventing their incorporation into DNA/RNA and avoiding chromosomal lesions. This chain is dITP/XTP pyrophosphatase, found in Bdellovibrio bacteriovorus (strain ATCC 15356 / DSM 50701 / NCIMB 9529 / HD100).